Consider the following 520-residue polypeptide: Hydroxymethylglutaryl-CoA synthase, cytoplasmic (520 aa).

Ser4 carries the phosphoserine modification. 2 residues coordinate (3S)-3-hydroxy-3-methylglutaryl-CoA: Asp43 and Ala44. Residue 44-46 (AGK) coordinates CoA. An N6-acetyllysine modification is found at Lys46. Glu95 functions as the Proton donor/acceptor in the catalytic mechanism. The (3S)-3-hydroxy-3-methylglutaryl-CoA site is built by Cys129, Asn167, Thr171, Ser221, and His264. The active-site Acyl-thioester intermediate is Cys129. Asn167 provides a ligand contact to CoA. Ser221 contributes to the CoA binding site. Residue His264 is the Proton donor/acceptor of the active site. CoA-binding residues include Lys269 and Lys273. (3S)-3-hydroxy-3-methylglutaryl-CoA is bound by residues Lys273, Asn343, and Ser377. An N6-acetyllysine modification is found at Lys273. The interval 487 to 520 (NTATEHIPSPAKKVPRLPATSGEPESAVISNGEH) is disordered. Phosphoserine occurs at positions 495 and 516.

The protein belongs to the thiolase-like superfamily. HMG-CoA synthase family. In terms of assembly, homodimer.

It localises to the cytoplasm. The enzyme catalyses acetoacetyl-CoA + acetyl-CoA + H2O = (3S)-3-hydroxy-3-methylglutaryl-CoA + CoA + H(+). Its pathway is metabolic intermediate biosynthesis; (R)-mevalonate biosynthesis; (R)-mevalonate from acetyl-CoA: step 2/3. Catalyzes the condensation of acetyl-CoA with acetoacetyl-CoA to form HMG-CoA, which is converted by HMG-CoA reductase (HMGCR) into mevalonate, a precursor for cholesterol synthesis. This is Hydroxymethylglutaryl-CoA synthase, cytoplasmic from Rattus norvegicus (Rat).